A 389-amino-acid polypeptide reads, in one-letter code: Chalcone synthase 1 (389 aa).

Residue cysteine 164 is part of the active site.

This sequence belongs to the thiolase-like superfamily. Chalcone/stilbene synthases family.

It catalyses the reaction (E)-4-coumaroyl-CoA + 3 malonyl-CoA + 3 H(+) = 2',4,4',6'-tetrahydroxychalcone + 3 CO2 + 4 CoA. The protein operates within secondary metabolite biosynthesis; flavonoid biosynthesis. Its function is as follows. The primary product of this enzyme is 4,2',4',6'-tetrahydroxychalcone (also termed naringenin-chalcone or chalcone) which can under specific conditions spontaneously isomerize into naringenin. The polypeptide is Chalcone synthase 1 (CHS1) (Cicer arietinum (Chickpea)).